The chain runs to 74 residues: Conotoxin Vi15a (74 aa).

An N-terminal signal peptide occupies residues Met-1–Gly-19. The propeptide occupies Lys-20–Val-43. Trp-72 is modified (tryptophan amide).

In terms of processing, contains four disulfide bonds. In terms of tissue distribution, expressed by the venom duct.

The protein resides in the secreted. The chain is Conotoxin Vi15a from Conus virgo (Virgin cone).